The chain runs to 217 residues: Putative cobalt transport protein CbiM (217 aa).

A run of 6 helical transmembrane segments spans residues 8–28 (LPPE…VYGA), 44–64 (LIAV…PSVT), 74–94 (GIAV…IVLL), 107–127 (TLGA…WIAF), 139–161 (VFAA…LALA), and 181–201 (IFAV…VMLV).

Belongs to the CbiM family. As to quaternary structure, forms an energy-coupling factor (ECF) transporter complex composed of an ATP-binding protein (A component, CbiO), a transmembrane protein (T component, CbiQ) and 2 possible substrate-capture proteins (S components, CbiM and CbiN) of unknown stoichimetry.

Its subcellular location is the cell membrane. Its pathway is cofactor biosynthesis; adenosylcobalamin biosynthesis. Its function is as follows. Part of the energy-coupling factor (ECF) transporter complex CbiMNOQ involved in cobalt import. The chain is Putative cobalt transport protein CbiM from Archaeoglobus fulgidus (strain ATCC 49558 / DSM 4304 / JCM 9628 / NBRC 100126 / VC-16).